A 378-amino-acid polypeptide reads, in one-letter code: Anhydro-N-acetylmuramic acid kinase (378 aa).

9–16 (GTSADGID) provides a ligand contact to ATP.

It belongs to the anhydro-N-acetylmuramic acid kinase family.

The enzyme catalyses 1,6-anhydro-N-acetyl-beta-muramate + ATP + H2O = N-acetyl-D-muramate 6-phosphate + ADP + H(+). It functions in the pathway amino-sugar metabolism; 1,6-anhydro-N-acetylmuramate degradation. It participates in cell wall biogenesis; peptidoglycan recycling. Functionally, catalyzes the specific phosphorylation of 1,6-anhydro-N-acetylmuramic acid (anhMurNAc) with the simultaneous cleavage of the 1,6-anhydro ring, generating MurNAc-6-P. Is required for the utilization of anhMurNAc either imported from the medium or derived from its own cell wall murein, and thus plays a role in cell wall recycling. This Prochlorococcus marinus (strain NATL1A) protein is Anhydro-N-acetylmuramic acid kinase.